A 234-amino-acid chain; its full sequence is Geranylgeranylglyceryl phosphate synthase (234 aa).

The Mg(2+) site is built by D24 and S52. Residues 172 to 178, 203 to 204, and 225 to 226 contribute to the sn-glycerol 1-phosphate site; these read YLEAGSG, GG, and GT.

Belongs to the GGGP/HepGP synthase family. Group II subfamily. Homodimer. Mg(2+) is required as a cofactor.

The catalysed reaction is sn-glycerol 1-phosphate + (2E,6E,10E)-geranylgeranyl diphosphate = sn-3-O-(geranylgeranyl)glycerol 1-phosphate + diphosphate. In terms of biological role, prenyltransferase that catalyzes the transfer of the geranylgeranyl moiety of geranylgeranyl diphosphate (GGPP) to the C3 hydroxyl of sn-glycerol-1-phosphate (G1P). The protein is Geranylgeranylglyceryl phosphate synthase of Zunongwangia profunda (strain DSM 18752 / CCTCC AB 206139 / SM-A87) (Wangia profunda).